Here is a 332-residue protein sequence, read N- to C-terminus: 3-dehydroquinate synthase (332 aa).

Residues 55–60, 89–93, 113–114, Lys126, Lys134, and 152–155 contribute to the NAD(+) site; these read DGEEYK, GVITD, TT, and TLST. Positions 167, 226, and 242 each coordinate Zn(2+).

This sequence belongs to the sugar phosphate cyclases superfamily. Dehydroquinate synthase family. NAD(+) is required as a cofactor. It depends on Co(2+) as a cofactor. The cofactor is Zn(2+).

The protein resides in the cytoplasm. It carries out the reaction 7-phospho-2-dehydro-3-deoxy-D-arabino-heptonate = 3-dehydroquinate + phosphate. It participates in metabolic intermediate biosynthesis; chorismate biosynthesis; chorismate from D-erythrose 4-phosphate and phosphoenolpyruvate: step 2/7. Catalyzes the conversion of 3-deoxy-D-arabino-heptulosonate 7-phosphate (DAHP) to dehydroquinate (DHQ). This chain is 3-dehydroquinate synthase, found in Pyrococcus abyssi (strain GE5 / Orsay).